The sequence spans 80 residues: Small ribosomal subunit protein bS21 (80 aa).

The protein belongs to the bacterial ribosomal protein bS21 family.

This is Small ribosomal subunit protein bS21 from Rhodospirillum rubrum (strain ATCC 11170 / ATH 1.1.1 / DSM 467 / LMG 4362 / NCIMB 8255 / S1).